The primary structure comprises 114 residues: Large ribosomal subunit protein uL22 (114 aa).

This sequence belongs to the universal ribosomal protein uL22 family. In terms of assembly, part of the 50S ribosomal subunit.

Functionally, this protein binds specifically to 23S rRNA; its binding is stimulated by other ribosomal proteins, e.g. L4, L17, and L20. It is important during the early stages of 50S assembly. It makes multiple contacts with different domains of the 23S rRNA in the assembled 50S subunit and ribosome. The globular domain of the protein is located near the polypeptide exit tunnel on the outside of the subunit, while an extended beta-hairpin is found that lines the wall of the exit tunnel in the center of the 70S ribosome. This is Large ribosomal subunit protein uL22 from Ehrlichia ruminantium (strain Gardel).